The primary structure comprises 358 residues: MKRLLLLEDGSVFEGEAFGADVETSGEIVFSTGMTGYQESITDQSYNGQIITFTYPLIGNYGINRDDYESIRPTCKGVVIYEWAEYPSNWRQQMTLDEFLKLKGIPGISGIDTRALTKIIRKHGTMKACLINEGNSIHEALENLQKSVLLNDQIEQVSTKLAYASPGVGKNIVLVDFGLKHSILRELSQRQCHITVVPHTTTAQEILNLNPDGVLLSNGPGNPEQLPNALQMIQEIQGKIPIFGICMGHQLFAKANGAKTYKMTFGHRGFNHAVRHLQTGQVDFTSQNHGYAVSREDFPEALFITHEEINDKTVEGVRHKYYPAFSVQFHPDAAPGPHDTSYLFDEFINMIDDFQQKS.

The tract at residues 1–168 (MKRLLLLEDG…TKLAYASPGV (168 aa)) is CPSase. Ser-45, Gly-219, and Gly-221 together coordinate L-glutamine. Residues 171 to 357 (NIVLVDFGLK…INMIDDFQQK (187 aa)) enclose the Glutamine amidotransferase type-1 domain. Cys-246 acts as the Nucleophile in catalysis. Met-247, Gln-250, Asn-288, Gly-290, and Tyr-291 together coordinate L-glutamine. Active-site residues include His-330 and Asp-332.

Belongs to the CarA family. As to quaternary structure, composed of two chains; the small (or glutamine) chain promotes the hydrolysis of glutamine to ammonia, which is used by the large (or ammonia) chain to synthesize carbamoyl phosphate. Tetramer of heterodimers (alpha,beta)4.

The enzyme catalyses hydrogencarbonate + L-glutamine + 2 ATP + H2O = carbamoyl phosphate + L-glutamate + 2 ADP + phosphate + 2 H(+). It carries out the reaction L-glutamine + H2O = L-glutamate + NH4(+). It functions in the pathway amino-acid biosynthesis; L-arginine biosynthesis; carbamoyl phosphate from bicarbonate: step 1/1. It participates in pyrimidine metabolism; UMP biosynthesis via de novo pathway; (S)-dihydroorotate from bicarbonate: step 1/3. Small subunit of the glutamine-dependent carbamoyl phosphate synthetase (CPSase). CPSase catalyzes the formation of carbamoyl phosphate from the ammonia moiety of glutamine, carbonate, and phosphate donated by ATP, constituting the first step of 2 biosynthetic pathways, one leading to arginine and/or urea and the other to pyrimidine nucleotides. The small subunit (glutamine amidotransferase) binds and cleaves glutamine to supply the large subunit with the substrate ammonia. In Streptococcus agalactiae serotype III (strain NEM316), this protein is Carbamoyl phosphate synthase small chain.